The primary structure comprises 144 residues: Large ribosomal subunit protein uL16 (144 aa).

This sequence belongs to the universal ribosomal protein uL16 family. As to quaternary structure, part of the 50S ribosomal subunit.

Its function is as follows. Binds 23S rRNA and is also seen to make contacts with the A and possibly P site tRNAs. In Acidobacterium capsulatum (strain ATCC 51196 / DSM 11244 / BCRC 80197 / JCM 7670 / NBRC 15755 / NCIMB 13165 / 161), this protein is Large ribosomal subunit protein uL16.